Here is a 362-residue protein sequence, read N- to C-terminus: Biotin synthase (362 aa).

A Radical SAM core domain is found at 39–267; it reads NVVQVSTLLS…ETQVRLSAGR (229 aa). [4Fe-4S] cluster-binding residues include cysteine 54, cysteine 58, and cysteine 61. Residues cysteine 98, cysteine 130, cysteine 190, and arginine 262 each contribute to the [2Fe-2S] cluster site. Positions 317 to 362 are disordered; it reads PFTKVSQPTTVEAKDSRYESLGEKPKWSRPSHTIEKNLELSGKGKN. Positions 328-354 are enriched in basic and acidic residues; the sequence is EAKDSRYESLGEKPKWSRPSHTIEKNL.

This sequence belongs to the radical SAM superfamily. Biotin synthase family. As to quaternary structure, homodimer. [4Fe-4S] cluster is required as a cofactor. The cofactor is [2Fe-2S] cluster.

It carries out the reaction (4R,5S)-dethiobiotin + (sulfur carrier)-SH + 2 reduced [2Fe-2S]-[ferredoxin] + 2 S-adenosyl-L-methionine = (sulfur carrier)-H + biotin + 2 5'-deoxyadenosine + 2 L-methionine + 2 oxidized [2Fe-2S]-[ferredoxin]. Its pathway is cofactor biosynthesis; biotin biosynthesis; biotin from 7,8-diaminononanoate: step 2/2. Functionally, catalyzes the conversion of dethiobiotin (DTB) to biotin by the insertion of a sulfur atom into dethiobiotin via a radical-based mechanism. The sequence is that of Biotin synthase from Flavobacterium psychrophilum (strain ATCC 49511 / DSM 21280 / CIP 103535 / JIP02/86).